The chain runs to 261 residues: ATP synthase subunit a (261 aa).

5 consecutive transmembrane segments (helical) span residues 28-48 (AVHL…LTIF), 89-109 (IAPL…MDWV), 140-160 (NITF…SIKV), 203-223 (LFGN…IGVF), and 229-249 (FLWA…FMML).

Belongs to the ATPase A chain family. F-type ATPases have 2 components, CF(1) - the catalytic core - and CF(0) - the membrane proton channel. CF(1) has five subunits: alpha(3), beta(3), gamma(1), delta(1), epsilon(1). CF(0) has three main subunits: a(1), b(2) and c(9-12). The alpha and beta chains form an alternating ring which encloses part of the gamma chain. CF(1) is attached to CF(0) by a central stalk formed by the gamma and epsilon chains, while a peripheral stalk is formed by the delta and b chains.

Its subcellular location is the cell inner membrane. Key component of the proton channel; it plays a direct role in the translocation of protons across the membrane. This Colwellia psychrerythraea (strain 34H / ATCC BAA-681) (Vibrio psychroerythus) protein is ATP synthase subunit a.